We begin with the raw amino-acid sequence, 494 residues long: Serine/threonine-protein kinase cst-1 (494 aa).

Residues 1 to 27 (MPPSTDSSRRNSEEGFSDGFKLDSSAL) are disordered. A Protein kinase domain is found at 35-286 (FDIVGKLGEG…ALRLCEHTFI (252 aa)). Residues 41–49 (LGEGSYGSV) and Lys64 each bind ATP. The Proton acceptor role is filled by Asp154. The disordered stretch occupies residues 364 to 413 (IPKSAYGSSRNNGSPRVQPPGHTASACDPSNNPPFAEEGTGPNFQIGTSE). Residues 369-378 (YGSSRNNGSP) are compositionally biased toward polar residues. Positions 443–490 (FEFLRNITLDELIRRKESLDSEMEEEIRELQRRYKTKRQPILDVIEIK) constitute an SARAH domain.

This sequence belongs to the protein kinase superfamily. STE Ser/Thr protein kinase family. STE20 subfamily. The cofactor is Mg(2+). Post-translationally, proteolytically cleaved by caspase-3 during apoptosis which results in kinase activation.

The enzyme catalyses L-seryl-[protein] + ATP = O-phospho-L-seryl-[protein] + ADP + H(+). The catalysed reaction is L-threonyl-[protein] + ATP = O-phospho-L-threonyl-[protein] + ADP + H(+). Functionally, serine/threonine-protein kinase which extends lifespan and delays tissue aging, probably by activating daf-16. This chain is Serine/threonine-protein kinase cst-1 (cst-1), found in Caenorhabditis briggsae.